The sequence spans 208 residues: ATP-dependent Clp protease proteolytic subunit 1 (208 aa).

Serine 108 serves as the catalytic Nucleophile. The active site involves histidine 133.

Belongs to the peptidase S14 family. In terms of assembly, fourteen ClpP subunits assemble into 2 heptameric rings which stack back to back to give a disk-like structure with a central cavity, resembling the structure of eukaryotic proteasomes.

The protein localises to the cytoplasm. It catalyses the reaction Hydrolysis of proteins to small peptides in the presence of ATP and magnesium. alpha-casein is the usual test substrate. In the absence of ATP, only oligopeptides shorter than five residues are hydrolyzed (such as succinyl-Leu-Tyr-|-NHMec, and Leu-Tyr-Leu-|-Tyr-Trp, in which cleavage of the -Tyr-|-Leu- and -Tyr-|-Trp bonds also occurs).. Functionally, cleaves peptides in various proteins in a process that requires ATP hydrolysis. Has a chymotrypsin-like activity. Plays a major role in the degradation of misfolded proteins. This Corynebacterium glutamicum (strain ATCC 13032 / DSM 20300 / JCM 1318 / BCRC 11384 / CCUG 27702 / LMG 3730 / NBRC 12168 / NCIMB 10025 / NRRL B-2784 / 534) protein is ATP-dependent Clp protease proteolytic subunit 1.